The chain runs to 880 residues: MKQLTGAQIRQMFLDFFQEKGHAVEPSASLVPHEDPSLLWINSGVATLKKYFDGRVIPQNPRITNAQKSIRTNDIENVGKTARHHTFFEMLGNFSIGDYFKEEAITWAWEFLTSDKWIGFDKELLSVTIHPEDEEAFTIWNEKMGVPKERIIRLEENFWDIGEGPSGPNTEIFYDRGEAYGNDFSDPELYPGGENERYLEVWNLVFSQFNHNPDGSYTPLPKKNIDTGMGLERMTSIVQDVPTNFDTDLFMPMIGATETISGEKYRNGDLEKDMAFKVIADHIRTVTFAVGDGALPSNEGRGYVLRRLLRRAVRYSKKLNINRPFMFELVPVVGEVMKDFYPEVLEKKDFIAKVVKNEEERFHETLHDGEAILAEVIAKAKEEKTTVISGVDAFRLYDTYGFPIELTEEYAEEAGMTVDHEGFENEMEKQRERARAARQDVDSMQVQGGVLGEVKVASEFVGYGTVATESNVVALVKNGEYTDSLQVGEEGQLMLDVTPFYAESGGQIADRGYLLADGVKVLVKDVQKAPNGQNLHKVVVEEGTLTKDAAVKAIIDTKNRSSVVKNHTATHLLHQALKDVLGTHVNQAGSLVTSERLRFDFSHFGQVQADELEKIERIVNEKIWESIDVEISQKAIEEAKEMGAMALFGEKYGDVVRVVQVGDYSLELCGGCHVDNTASIGIFKIVAESGIGAGTRRIEAVTGKSAYELMNDQVGLLKEAAGKMKTNPKDILTRVDGLFAEVKQLQKENESLAAKLSNIEAGNLTDSVMTVDGVNVLAAKVNVADMNNLRTMMDDLKNKLESAVVVLASVNDDKVNILAGVTKDLISQGYHAGKLVKEVASRCGGGGGGRPDMAQAGGKNPAQVEEALAFVQEYVKSVSK.

4 residues coordinate Zn(2+): His567, His571, Cys669, and His673.

It belongs to the class-II aminoacyl-tRNA synthetase family. Requires Zn(2+) as cofactor.

The protein localises to the cytoplasm. It carries out the reaction tRNA(Ala) + L-alanine + ATP = L-alanyl-tRNA(Ala) + AMP + diphosphate. Functionally, catalyzes the attachment of alanine to tRNA(Ala) in a two-step reaction: alanine is first activated by ATP to form Ala-AMP and then transferred to the acceptor end of tRNA(Ala). Also edits incorrectly charged Ser-tRNA(Ala) and Gly-tRNA(Ala) via its editing domain. The protein is Alanine--tRNA ligase of Bacillus cereus (strain ZK / E33L).